The chain runs to 147 residues: MKSLKKKRRIQILVAAAVALVLAVGLIGYGFRDGINLYRSPSQMAENPPEAGEVFRLGGLVEDGSLVRGASETVTFRVTDGGATVPVRFTGVLPDLFSEGQGMIGTGRMEGETFVASEILAKHDENYMPREVMDSLKEQGVYQEPNS.

Residues 1 to 9 lie on the Cytoplasmic side of the membrane; that stretch reads MKSLKKKRR. Residues 10–30 traverse the membrane as a helical; Signal-anchor for type II membrane protein segment; the sequence is IQILVAAAVALVLAVGLIGYG. Residues 31 to 147 lie on the Periplasmic side of the membrane; it reads FRDGINLYRS…EQGVYQEPNS (117 aa). The heme site is built by His-123 and Tyr-127.

This sequence belongs to the CcmE/CycJ family.

It is found in the cell inner membrane. In terms of biological role, heme chaperone required for the biogenesis of c-type cytochromes. Transiently binds heme delivered by CcmC and transfers the heme to apo-cytochromes in a process facilitated by CcmF and CcmH. This is Cytochrome c-type biogenesis protein CcmE from Paracoccus denitrificans (strain Pd 1222).